The following is a 220-amino-acid chain: UPF0502 protein Pnap_3223 (220 aa).

Belongs to the UPF0502 family.

In Polaromonas naphthalenivorans (strain CJ2), this protein is UPF0502 protein Pnap_3223.